A 68-amino-acid chain; its full sequence is U-actitoxin-Avt1 (68 aa).

Positions 1-22 (MNSKAIISVFLIMLVVVSCTQA) are cleaved as a signal peptide. The propeptide occupies 23-40 (TYETEDDDEPGPRHSEKR). The disordered stretch occupies residues 24 to 50 (YETEDDDEPGPRHSEKRSCARGCGGDS). Residues 32-41 (PGPRHSEKRS) are compositionally biased toward basic and acidic residues. 3 disulfides stabilise this stretch: Cys-42-Cys-54, Cys-46-Cys-59, and Cys-52-Cys-66.

In terms of biological role, stable protein with probable toxin activity. Does not show activity on all channels tested. Shows no hemolytic activity on rat erythrocytes. The sequence is that of U-actitoxin-Avt1 from Aulactinia veratra (Green snakelock anemone).